The primary structure comprises 197 residues: Histone chaperone asf1b-B (197 aa).

It belongs to the ASF1 family. Interacts with histone H3 and histone H4.

It is found in the nucleus. Functionally, histone chaperone that facilitates histone deposition and histone exchange and removal during nucleosome assembly and disassembly. The chain is Histone chaperone asf1b-B (asf1bb) from Danio rerio (Zebrafish).